Consider the following 522-residue polypeptide: MSLQSLLSTKIVRATSIADAAFDAVVLVGSQDNVQQFGAIQQVSAIAPAVNNFLKLHSGAFNSTSLVQVDSSVVPSGRLILSGTGNVSRDYDDVRRYQAAARKGISMALSAGVKSPLLITLPNSRFPNAELVAALGALTPVYTPLNVREEENKQKLNQLGLLAIGNSDTSARLEKLVEAYDASFTVCRDVGEAGPERMAPPRVAEYIQGAFANGNIKVTVVDDQSVILKDFPLMAAVNRAANCVKEHQARLIRLEYVGEGETQDTFFVVGKGVTIDTGGCDLKTGGHMFGMCRDKYGSAVVGGFFKAIDVLKPKNIKAVGYMCMVRNSIGSHAYTCDEVITSRSGKRIHIYNTDAEGRLTMLDPLTLAKEEALNAKNPHLFTVATLTGHEVLSYGYYAAIMDNGPAKASGWARRVQNVGDEFGQPIEISRLHPEDFAFHMAECEQADLRQGNTKPSVATLRGHQTPAAFLQMASRIDEHGTNSSHPLKYSHIDMGGCSGDHPSVSFPNPLVTLVAGLVLPHV.

Zn(2+) contacts are provided by K271 and D276. The active site involves K283. Residues D294, D354, and E356 each coordinate Zn(2+). Residue R358 is part of the active site.

Belongs to the peptidase M17 family. Requires Zn(2+) as cofactor.

This is Putative aminopeptidase W07G4.4 (lap-2) from Caenorhabditis elegans.